An 839-amino-acid chain; its full sequence is Protein translocase subunit SecA (839 aa).

Residues Gln85, 103-107 (GEGKT), and Asp493 contribute to the ATP site. The span at 780 to 790 (QIHEQERERAS) shows a compositional bias: basic and acidic residues. Residues 780–839 (QIHEQERERASQRATTAAPQNIQSQQSANTDDLPKVERNEACPCGSGKKFKNCHGRKSFS) form a disordered region. A compositionally biased stretch (polar residues) spans 791 to 809 (QRATTAAPQNIQSQQSANT). Zn(2+)-binding residues include Cys821, Cys823, Cys832, and His833. Basic residues predominate over residues 827 to 839 (KKFKNCHGRKSFS).

Belongs to the SecA family. In terms of assembly, monomer and homodimer. Part of the essential Sec protein translocation apparatus which comprises SecA, SecYEG and auxiliary proteins SecDF. Other proteins may also be involved. Zn(2+) is required as a cofactor.

It localises to the cell membrane. It is found in the cytoplasm. It catalyses the reaction ATP + H2O + cellular proteinSide 1 = ADP + phosphate + cellular proteinSide 2.. Functionally, part of the Sec protein translocase complex. Interacts with the SecYEG preprotein conducting channel. Has a central role in coupling the hydrolysis of ATP to the transfer of proteins into and across the cell membrane, serving as an ATP-driven molecular motor driving the stepwise translocation of polypeptide chains across the membrane. The protein is Protein translocase subunit SecA of Streptococcus pyogenes serotype M28 (strain MGAS6180).